The following is an 85-amino-acid chain: Putative plasmid stability protein y4jJ (85 aa).

Residues Glu66–Pro78 are compositionally biased toward basic and acidic residues. The segment at Glu66–Glu85 is disordered.

This sequence to P.syringae pv tomato plasmid stability protein StbC.

In terms of biological role, involved in plasmid stability. The chain is Putative plasmid stability protein y4jJ from Sinorhizobium fredii (strain NBRC 101917 / NGR234).